A 915-amino-acid chain; its full sequence is Probable dipeptidyl-aminopeptidase B (915 aa).

Disordered stretches follow at residues 1 to 20 and 52 to 74; these read MAGE…TRGS and QDSR…NEEE. Residues 1–95 lie on the Cytoplasmic side of the membrane; sequence MAGEKGGSRD…GGKTVQKTTK (95 aa). Residues 55–72 are compositionally biased toward basic and acidic residues; it reads RLGEKDQRDDDHDQYRNE. Residues 96–116 form a helical; Signal-anchor for type II membrane protein membrane-spanning segment; that stretch reads IVLWALLFLCVGGWSLAFVIF. At 117–915 the chain is on the vacuolar side; sequence LFRGHDTPQT…RAETWGGLPV (799 aa). 4 N-linked (GlcNAc...) asparagine glycosylation sites follow: Asn133, Asn179, Asn349, and Asn572. Ser754 acts as the Charge relay system in catalysis. Asn813 carries an N-linked (GlcNAc...) asparagine glycan. Active-site charge relay system residues include Asp831 and His864. Asn900 carries N-linked (GlcNAc...) asparagine glycosylation.

Belongs to the peptidase S9B family.

The protein resides in the vacuole membrane. It catalyses the reaction Release of an N-terminal dipeptide, Xaa-Yaa-|-Zaa-, from a polypeptide, preferentially when Yaa is Pro, provided Zaa is neither Pro nor hydroxyproline.. Its function is as follows. Type IV dipeptidyl-peptidase which removes N-terminal dipeptides sequentially from polypeptides having unsubstituted N-termini provided that the penultimate residue is proline. The sequence is that of Probable dipeptidyl-aminopeptidase B (DAPB) from Blastomyces gilchristii (strain SLH14081) (Blastomyces dermatitidis).